The chain runs to 302 residues: Arginase (302 aa).

Residues His-103, Asp-126, His-128, and Asp-130 each contribute to the Mn(2+) site. Residues 128–132 (HGDLN), 139–141 (SGN), and Asp-180 contribute to the substrate site. 2 residues coordinate Mn(2+): Asp-229 and Asp-231. Substrate-binding residues include Thr-243 and Glu-274.

It belongs to the arginase family. The cofactor is Mn(2+).

The enzyme catalyses L-arginine + H2O = urea + L-ornithine. The protein operates within nitrogen metabolism; urea cycle; L-ornithine and urea from L-arginine: step 1/1. This is Arginase (arg) from Staphylococcus aureus (strain COL).